Consider the following 130-residue polypeptide: Ribosome-binding factor A (130 aa).

The protein belongs to the RbfA family. Monomer. Binds 30S ribosomal subunits, but not 50S ribosomal subunits or 70S ribosomes.

It is found in the cytoplasm. One of several proteins that assist in the late maturation steps of the functional core of the 30S ribosomal subunit. Associates with free 30S ribosomal subunits (but not with 30S subunits that are part of 70S ribosomes or polysomes). Required for efficient processing of 16S rRNA. May interact with the 5'-terminal helix region of 16S rRNA. This is Ribosome-binding factor A from Lachnospira eligens (strain ATCC 27750 / DSM 3376 / VPI C15-48 / C15-B4) (Eubacterium eligens).